Consider the following 86-residue polypeptide: Putative membrane protein insertion efficiency factor (86 aa).

A disordered region spans residues 66 to 86; it reads FSKGGFDPVPPHDGVPGKKED.

This sequence belongs to the UPF0161 family.

Its subcellular location is the cell inner membrane. In terms of biological role, could be involved in insertion of integral membrane proteins into the membrane. The sequence is that of Putative membrane protein insertion efficiency factor from Chlorobium luteolum (strain DSM 273 / BCRC 81028 / 2530) (Pelodictyon luteolum).